Consider the following 126-residue polypeptide: Probable glycine cleavage system H protein (126 aa).

Residues 24–106 (VVRVGITDFA…FGDGWLLEVE (83 aa)) form the Lipoyl-binding domain. Lys-65 is subject to N6-lipoyllysine.

The protein belongs to the GcvH family. The glycine cleavage system is composed of four proteins: P, T, L and H. It depends on (R)-lipoate as a cofactor.

Functionally, the glycine cleavage system catalyzes the degradation of glycine. The H protein shuttles the methylamine group of glycine from the P protein to the T protein. In Natronomonas pharaonis (strain ATCC 35678 / DSM 2160 / CIP 103997 / JCM 8858 / NBRC 14720 / NCIMB 2260 / Gabara) (Halobacterium pharaonis), this protein is Probable glycine cleavage system H protein.